A 144-amino-acid polypeptide reads, in one-letter code: Large ribosomal subunit protein uL15 (144 aa).

The segment at 1–53 (MRLNTLSPAQGAKQAPKRVGRGIGSGLGKTGGRGHKGQNSRTGGGVRRGFEGG) is disordered. The segment covering 21–31 (RGIGSGLGKTG) has biased composition (gly residues).

It belongs to the universal ribosomal protein uL15 family. Part of the 50S ribosomal subunit.

Functionally, binds to the 23S rRNA. The protein is Large ribosomal subunit protein uL15 of Hamiltonella defensa subsp. Acyrthosiphon pisum (strain 5AT).